Consider the following 484-residue polypeptide: Glutamyl-tRNA(Gln) amidotransferase subunit A (484 aa).

Catalysis depends on charge relay system residues K76 and S151. S175 (acyl-ester intermediate) is an active-site residue.

The protein belongs to the amidase family. GatA subfamily. In terms of assembly, heterotrimer of A, B and C subunits.

The catalysed reaction is L-glutamyl-tRNA(Gln) + L-glutamine + ATP + H2O = L-glutaminyl-tRNA(Gln) + L-glutamate + ADP + phosphate + H(+). Its function is as follows. Allows the formation of correctly charged Gln-tRNA(Gln) through the transamidation of misacylated Glu-tRNA(Gln) in organisms which lack glutaminyl-tRNA synthetase. The reaction takes place in the presence of glutamine and ATP through an activated gamma-phospho-Glu-tRNA(Gln). This Hahella chejuensis (strain KCTC 2396) protein is Glutamyl-tRNA(Gln) amidotransferase subunit A.